We begin with the raw amino-acid sequence, 1029 residues long: MGPYCAPHPLSLLVQAAALAAALAEGTLPAFLPCELQPHGQVDCNWLFLKSVPHFSAGAPRANVTSLSLISNRIHHLHDSDFVHLSNLRVLNLKWNCPPAGLSPMHFPCRMTIEPNTFLAVPTLEELNLSYNGITTVPALPSSLVSLSLSHTSILVLGPTHFTGLHALRFLYMDGNCYYMNPCPRALEVAPGALLGLGNLTHLSLKYNNLTEVPRRLPPSLDTLLLSYNHIVTLAPEDLANLTALRVLDVGGNCRRCDHARNPCRECPKNFPKLHPDTFSHLSRLEGLVLKDSSLYKLEKDWFRGLGRLQVLDLSENFLYDYITKTTIFNDLTQLRRLNLSFNYHKKVSFAHLHLASSFGSLVSLEKLDMHGIFFRSLTNITLQSLTRLPKLQSLHLQLNFINQAQLSIFGAFPSLLFVDLSDNRISGAATPAAALGEVDSRVEVWRLPRGLAPGPLDAVSSKDFMPSCNLNFTLDLSRNNLVTIQQEMFTRLSRLQCLRLSHNSISQAVNGSQFVPLTSLRVLDLSHNKLDLYHGRSFTELPQLEALDLSYNSQPFSMQGVGHNLSFVAQLPSLRYLSLAHNGIHSRVSQKLSSASLRALDFSGNSLSQMWAEGDLYLCFFKGLRNLVQLDLSENHLHTLLPRHLDNLPKSLRQLRLRDNNLAFFNWSSLTVLPRLEALDLAGNQLKALSNGSLPPGIRLQKLDVSSNSIGFVIPGFFVRATRLIELNLSANALKTVDPSWFGSLAGTLKILDVSANPLHCACGAAFVDFLLERQEAVPGLSRRVTCGSPGQLQGRSIFTQDLRLCLDETLSLDCFGLSLLMVALGLAVPMLHHLCGWDLWYCFHLCLAHLPRRRRQRGEDTLLYDAVVVFDKVQSAVADWVYNELRVQLEERRGRRALRLCLEERDWLPGKTLFENLWASVYSSRKTMFVLDHTDRVSGLLRASFLLAQQRLLEDRKDVVVLVILRPAAYRSRYVRLRQRLCRQSVLLWPHQPSGQGSFWANLGIALTRDNRHFYNRNFCRGPTTAE.

The N-terminal stretch at 1-24 is a signal peptide; the sequence is MGPYCAPHPLSLLVQAAALAAALA. At 25-815 the chain is on the extracellular side; the sequence is EGTLPAFLPC…LCLDETLSLD (791 aa). Cysteine 34 and cysteine 44 are disulfide-bonded. 46-50 is a binding site for DNA; the sequence is WLFLK. LRR repeat units lie at residues 61 to 84, 86 to 109, 121 to 146, 149 to 165, 166 to 189, 197 to 220, 222 to 241, 242 to 267, 282 to 305, 307 to 331, 332 to 355, 362 to 385, 389 to 412, 414 to 439, 469 to 492, 494 to 517, 518 to 541, 543 to 570, 572 to 596, 598 to 620, 625 to 648, 650 to 673, 674 to 697, 699 to 721, 722 to 745, and 747 to 770; these read RANV…DFVH, SNLR…HFPC, VPTL…SLVS, LSHT…FTGL, HALR…ALEV, LGNL…LPPS, DTLL…DLAN, LTAL…CREC, LSRL…WFRG, GRLQ…IFND, LTQL…HLHL, LVSL…TLQS, LPKL…IFGA, PSLL…LGEV, CNLN…MFTR, SRLQ…QFVP, LTSL…SFTE, PQLE…SFVA, LPSL…LSSA, LRAL…LYLC, LRNL…HLDN, PKSL…SLTV, LPRL…SLPP, IRLQ…FFVR, ATRL…WFGS, and AGTL…AFVD. Asparagine 63 is a glycosylation site (N-linked (GlcNAc...) asparagine). DNA is bound by residues 71–76 and 94–108; these read SNRIHH and KWNC…MHFP. An intrachain disulfide couples cysteine 97 to cysteine 109. Asparagine 128 carries an N-linked (GlcNAc...) asparagine glycan. DNA is bound at residue tyrosine 131. An intrachain disulfide couples cysteine 177 to cysteine 183. 178–180 serves as a coordination point for DNA; that stretch reads YYM. N-linked (GlcNAc...) asparagine glycosylation occurs at asparagine 199. Tyrosine 207 lines the DNA pocket. Residues asparagine 209 and asparagine 241 are each glycosylated (N-linked (GlcNAc...) asparagine). 2 cysteine pairs are disulfide-bonded: cysteine 254–cysteine 267 and cysteine 257–cysteine 264. The S-palmitoyl cysteine moiety is linked to residue cysteine 257. A DNA-binding site is contributed by arginine 261. Cysteine 264 is lipidated: S-palmitoyl cysteine. N-linked (GlcNAc...) asparagine glycosylation is found at asparagine 339 and asparagine 380. Cysteine 469 and cysteine 498 form a disulfide bridge. N-linked (GlcNAc...) asparagine glycans are attached at residues asparagine 472 and asparagine 511. The N-linked (GlcNAc...) asparagine glycan is linked to asparagine 565. 2 N-linked (GlcNAc...) asparagine glycosylation sites follow: asparagine 667 and asparagine 692. The N-linked (GlcNAc...) asparagine glycan is linked to asparagine 729. Disulfide bonds link cysteine 762–cysteine 788 and cysteine 764–cysteine 807. Residues 816–836 traverse the membrane as a helical segment; the sequence is CFGLSLLMVALGLAVPMLHHL. At 837 to 1029 the chain is on the cytoplasmic side; sequence CGWDLWYCFH…NFCRGPTTAE (193 aa). The TIR domain maps to 864–1009; it reads LLYDAVVVFD…SFWANLGIAL (146 aa).

Belongs to the Toll-like receptor family. Monomer and homodimer. Exists as a monomer in the absence of unmethylated cytidine-phosphate-guanosine (CpG) ligand. Proteolytic processing of an insertion loop (Z-loop) is required for homodimerization upon binding to the unmethylated CpG ligand leading to its activation. Interacts with MYD88 via their respective TIR domains. Interacts with BTK. Interacts (via transmembrane domain) with UNC93B1. Interacts with CD300LH; the interaction may promote full activation of TLR9-triggered innate responses. Interacts with CNPY3 and HSP90B1; this interaction is required for proper folding in the endoplasmic reticulum. Interacts with SMPDL3B. Interacts with CD82; this interaction is essential for TLR9-dependent myddosome formation in response to CpG stimulation. In terms of processing, activated by proteolytic cleavage of the flexible loop between repeats LRR14 and LRR15 within the ectodomain. Cleavage requires UNC93B1. Proteolytically processed by first removing the majority of the ectodomain by either asparagine endopeptidase (AEP) or a cathepsin followed by a trimming event that is solely cathepsin mediated and required for optimal receptor signaling. Palmitoylated by ZDHHC3 in the Golgi regulates TLR9 trafficking from the Golgi to endosomes. Depalmitoylation by PPT1 controls the release of TLR9 from UNC93B1 in endosomes.

The protein localises to the endoplasmic reticulum membrane. Its subcellular location is the endosome. It localises to the lysosome. The protein resides in the cytoplasmic vesicle. It is found in the phagosome. Its function is as follows. Key component of innate and adaptive immunity. TLRs (Toll-like receptors) control host immune response against pathogens through recognition of molecular patterns specific to microorganisms. TLR9 is a nucleotide-sensing TLR which is activated by unmethylated cytidine-phosphate-guanosine (CpG) dinucleotides. Acts via MYD88 and TRAF6, leading to NF-kappa-B activation, cytokine secretion and the inflammatory response. Upon CpG stimulation, induces B-cell proliferation, activation, survival and antibody production. The protein is Toll-like receptor 9 (TLR9) of Bos taurus (Bovine).